Consider the following 66-residue polypeptide: Large ribosomal subunit protein bL31 (66 aa).

Zn(2+) is bound by residues cysteine 16, cysteine 18, cysteine 36, and cysteine 39.

This sequence belongs to the bacterial ribosomal protein bL31 family. Type A subfamily. In terms of assembly, part of the 50S ribosomal subunit. The cofactor is Zn(2+).

Functionally, binds the 23S rRNA. The chain is Large ribosomal subunit protein bL31 from Sulfurimonas denitrificans (strain ATCC 33889 / DSM 1251) (Thiomicrospira denitrificans (strain ATCC 33889 / DSM 1251)).